Reading from the N-terminus, the 461-residue chain is Fumarate hydratase class II (461 aa).

Substrate-binding positions include 97–99 (SGT), 127–130 (HPND), 137–139 (SSN), and Thr-185. His-186 acts as the Proton donor/acceptor in catalysis. Ser-316 is an active-site residue. Residues Ser-317 and 322–324 (KVN) each bind substrate.

This sequence belongs to the class-II fumarase/aspartase family. Fumarase subfamily. As to quaternary structure, homotetramer.

The protein localises to the cytoplasm. It catalyses the reaction (S)-malate = fumarate + H2O. It functions in the pathway carbohydrate metabolism; tricarboxylic acid cycle; (S)-malate from fumarate: step 1/1. Its function is as follows. Involved in the TCA cycle. Catalyzes the stereospecific interconversion of fumarate to L-malate. In Staphylococcus epidermidis (strain ATCC 35984 / DSM 28319 / BCRC 17069 / CCUG 31568 / BM 3577 / RP62A), this protein is Fumarate hydratase class II.